Consider the following 194-residue polypeptide: 5'-deoxynucleotidase PBPRA2627 (194 aa).

Substrate is bound by residues 18–19 (RW) and H33. The HD domain occupies 30–142 (ISEHSLQVAF…VKQADSLCAY (113 aa)). A divalent metal cation is bound by residues H33, H68, and D69. Substrate is bound by residues D69, 77–80 (DMPT), and D137. D137 is an a divalent metal cation binding site.

Belongs to the 5DNU family. Homodimer. A divalent metal cation serves as cofactor.

It localises to the cytoplasm. The enzyme catalyses a 2'-deoxyribonucleoside 5'-phosphate + H2O = a 2'-deoxyribonucleoside + phosphate. Functionally, catalyzes the strictly specific dephosphorylation of 2'-deoxyribonucleoside 5'-monophosphates. The chain is 5'-deoxynucleotidase PBPRA2627 from Photobacterium profundum (strain SS9).